Here is a 228-residue protein sequence, read N- to C-terminus: Prophenin-2 (228 aa).

A signal peptide spans 1 to 29; that stretch reads METQRASLCLGRWSLWLLLLALVVPSASA. A propeptide spanning residues 30 to 146 is cleaved from the precursor; the sequence is QALSYREAVL…FLRRPRLRRQ (117 aa). 2 cysteine pairs are disulfide-bonded: Cys-85-Cys-96 and Cys-107-Cys-124. Repeat copies occupy residues 148-157, 158-167, 168-177, 178-187, 188-197, 198-207, and 208-217. The segment at 148-217 is 7 X 10 AA tandem repeats; sequence FPPPNVPGPR…FPPPPPFRPP (70 aa). Disordered stretches follow at residues 167 to 195 and 207 to 228; these read RFPPPNFPGPRFPPPNFPGPRFPPPNFPG and WFPPPPPFRPPPFGPPRFPGRR. Proline amide is present on Pro-225. A propeptide spans 226 to 228 (removed in mature form); that stretch reads GRR.

This sequence belongs to the cathelicidin family.

The protein resides in the secreted. In terms of biological role, exerts antimicrobial activity. It is more effective against Gram-negative bacteria than Gram-positive bacteria. The chain is Prophenin-2 from Sus scrofa (Pig).